Reading from the N-terminus, the 182-residue chain is ATP synthase subunit delta (182 aa).

It belongs to the ATPase delta chain family. As to quaternary structure, F-type ATPases have 2 components, F(1) - the catalytic core - and F(0) - the membrane proton channel. F(1) has five subunits: alpha(3), beta(3), gamma(1), delta(1), epsilon(1). F(0) has three main subunits: a(1), b(2) and c(10-14). The alpha and beta chains form an alternating ring which encloses part of the gamma chain. F(1) is attached to F(0) by a central stalk formed by the gamma and epsilon chains, while a peripheral stalk is formed by the delta and b chains.

The protein resides in the cell membrane. Its activity is regulated as follows. Increases 2-fold following exposure to low pH. Its function is as follows. F(1)F(0) ATP synthase produces ATP from ADP in the presence of a proton or sodium gradient. F-type ATPases consist of two structural domains, F(1) containing the extramembraneous catalytic core and F(0) containing the membrane proton channel, linked together by a central stalk and a peripheral stalk. During catalysis, ATP synthesis in the catalytic domain of F(1) is coupled via a rotary mechanism of the central stalk subunits to proton translocation. In terms of biological role, this protein is part of the stalk that links CF(0) to CF(1). It either transmits conformational changes from CF(0) to CF(1) or is implicated in proton conduction. The chain is ATP synthase subunit delta from Lactobacillus acidophilus (strain ATCC 700396 / NCK56 / N2 / NCFM).